The sequence spans 333 residues: Porphobilinogen deaminase (333 aa).

S-(dipyrrolylmethanemethyl)cysteine is present on cysteine 255.

It belongs to the HMBS family. In terms of assembly, monomer. It depends on dipyrromethane as a cofactor.

It catalyses the reaction 4 porphobilinogen + H2O = hydroxymethylbilane + 4 NH4(+). It participates in porphyrin-containing compound metabolism; protoporphyrin-IX biosynthesis; coproporphyrinogen-III from 5-aminolevulinate: step 2/4. Its function is as follows. Tetrapolymerization of the monopyrrole PBG into the hydroxymethylbilane pre-uroporphyrinogen in several discrete steps. The sequence is that of Porphobilinogen deaminase from Burkholderia vietnamiensis (strain G4 / LMG 22486) (Burkholderia cepacia (strain R1808)).